A 368-amino-acid polypeptide reads, in one-letter code: Probable endopolygalacturonase A (368 aa).

The signal sequence occupies residues 1 to 18 (MRSVELLSLAALGSLVAA). A propeptide spanning residues 19–31 (APAPSRVSDLTKR) is cleaved from the precursor. Residues cysteine 35 and cysteine 50 are joined by a disulfide bond. 7 PbH1 repeats span residues 140-162 (LEDSTITGLSIKNTPVQAISVQA), 167-192 (LIDITIDNSDGDDNGGHNTDGFDISE), 193-214 (STGVYIRGATVKNQDDCIAINS), 215-235 (GENIEFSGGTCSGGHGLSIGS), 244-265 (VKNVTITDSTVTDSANGVRIKT), 273-295 (VSEVTYSNIKLSGITDYGIVIEQ), and 307-352 (TTGV…DITG). The active-site Proton donor is the aspartate 207. A disulfide bridge connects residues cysteine 209 and cysteine 225. Residue histidine 229 is part of the active site. N-linked (GlcNAc...) asparagine glycosylation is present at asparagine 246. Intrachain disulfides connect cysteine 335–cysteine 340 and cysteine 359–cysteine 368.

It belongs to the glycosyl hydrolase 28 family.

It localises to the secreted. It carries out the reaction (1,4-alpha-D-galacturonosyl)n+m + H2O = (1,4-alpha-D-galacturonosyl)n + (1,4-alpha-D-galacturonosyl)m.. In terms of biological role, involved in maceration and soft-rotting of plant tissue. Hydrolyzes the 1,4-alpha glycosidic bonds of de-esterified pectate in the smooth region of the plant cell wall. This Neosartorya fischeri (strain ATCC 1020 / DSM 3700 / CBS 544.65 / FGSC A1164 / JCM 1740 / NRRL 181 / WB 181) (Aspergillus fischerianus) protein is Probable endopolygalacturonase A (pgaA).